Reading from the N-terminus, the 283-residue chain is Bifunctional protein FolD (283 aa).

Residues 166 to 168 (GAS), Ser191, and Ile232 each bind NADP(+).

The protein belongs to the tetrahydrofolate dehydrogenase/cyclohydrolase family. In terms of assembly, homodimer.

The enzyme catalyses (6R)-5,10-methylene-5,6,7,8-tetrahydrofolate + NADP(+) = (6R)-5,10-methenyltetrahydrofolate + NADPH. It carries out the reaction (6R)-5,10-methenyltetrahydrofolate + H2O = (6R)-10-formyltetrahydrofolate + H(+). Its pathway is one-carbon metabolism; tetrahydrofolate interconversion. Catalyzes the oxidation of 5,10-methylenetetrahydrofolate to 5,10-methenyltetrahydrofolate and then the hydrolysis of 5,10-methenyltetrahydrofolate to 10-formyltetrahydrofolate. This is Bifunctional protein FolD from Chromobacterium violaceum (strain ATCC 12472 / DSM 30191 / JCM 1249 / CCUG 213 / NBRC 12614 / NCIMB 9131 / NCTC 9757 / MK).